Here is a 97-residue protein sequence, read N- to C-terminus: MAWRGSISKSMKELRILLCQSSPASAPTRTFVEKNYKDLKSLNPKLPILIRECSGVQPQMWARYDMGVERCVNLDGLTEPQILKALENLVKSGATKA.

C19 and C53 are disulfide-bonded.

It belongs to the complex I NDUFA2 subunit family. Complex I is composed of at least 49 different subunits.

It is found in the mitochondrion inner membrane. Functionally, accessory subunit of the mitochondrial membrane respiratory chain NADH dehydrogenase (Complex I), that is believed not to be involved in catalysis. Complex I functions in the transfer of electrons from NADH to the respiratory chain. The immediate electron acceptor for the enzyme is believed to be ubiquinone. The chain is NADH dehydrogenase [ubiquinone] 1 alpha subcomplex subunit 2 from Arabidopsis thaliana (Mouse-ear cress).